A 319-amino-acid polypeptide reads, in one-letter code: Ornithine carbamoyltransferase (319 aa).

Residues 63-66, Gln-90, Arg-114, and 141-144 each bind carbamoyl phosphate; these read STRT and HPCQ. Residues Asn-172, Asp-236, and 240-241 contribute to the L-ornithine site; that span reads SM. Carbamoyl phosphate contacts are provided by residues 276 to 277 and Arg-304; that span reads CL.

This sequence belongs to the aspartate/ornithine carbamoyltransferase superfamily. OTCase family.

It localises to the cytoplasm. The enzyme catalyses carbamoyl phosphate + L-ornithine = L-citrulline + phosphate + H(+). It functions in the pathway amino-acid biosynthesis; L-arginine biosynthesis; L-arginine from L-ornithine and carbamoyl phosphate: step 1/3. Functionally, reversibly catalyzes the transfer of the carbamoyl group from carbamoyl phosphate (CP) to the N(epsilon) atom of ornithine (ORN) to produce L-citrulline. The polypeptide is Ornithine carbamoyltransferase (Halalkalibacterium halodurans (strain ATCC BAA-125 / DSM 18197 / FERM 7344 / JCM 9153 / C-125) (Bacillus halodurans)).